The sequence spans 446 residues: Tubulin beta-2 chain (446 aa).

GTP contacts are provided by Gln-11, Glu-69, Ser-138, Gly-142, Thr-143, Gly-144, Asn-204, and Asn-226. Mg(2+) is bound at residue Glu-69. The interval 424–446 is disordered; sequence QYQEATADEEGEFDEDEEGGGDE. Residues 429–446 are compositionally biased toward acidic residues; it reads TADEEGEFDEDEEGGGDE.

This sequence belongs to the tubulin family. In terms of assembly, dimer of alpha and beta chains. A typical microtubule is a hollow water-filled tube with an outer diameter of 25 nm and an inner diameter of 15 nM. Alpha-beta heterodimers associate head-to-tail to form protofilaments running lengthwise along the microtubule wall with the beta-tubulin subunit facing the microtubule plus end conferring a structural polarity. Microtubules usually have 13 protofilaments but different protofilament numbers can be found in some organisms and specialized cells. Requires Mg(2+) as cofactor.

Its subcellular location is the cytoplasm. The protein resides in the cytoskeleton. Its function is as follows. Tubulin is the major constituent of microtubules, a cylinder consisting of laterally associated linear protofilaments composed of alpha- and beta-tubulin heterodimers. Microtubules grow by the addition of GTP-tubulin dimers to the microtubule end, where a stabilizing cap forms. Below the cap, tubulin dimers are in GDP-bound state, owing to GTPase activity of alpha-tubulin. The polypeptide is Tubulin beta-2 chain (betaTub85D) (Drosophila erecta (Fruit fly)).